Reading from the N-terminus, the 281-residue chain is Phosphonates import ATP-binding protein PhnC 2 (281 aa).

The region spanning 4–238 (LTVDNVTKTY…LVDDLYGNVE (235 aa)) is the ABC transporter domain. 35-42 (GESGAGKS) contacts ATP. The interval 243 to 281 (ATDNSDNSTVDTSDGTRYDTETGSDGTDEVDVIGRQVES) is disordered. Residues 244-255 (TDNSDNSTVDTS) show a composition bias toward low complexity.

It belongs to the ABC transporter superfamily. Phosphonates importer (TC 3.A.1.9.1) family. As to quaternary structure, the complex is composed of two ATP-binding proteins (PhnC), two transmembrane proteins (PhnE) and a solute-binding protein (PhnD).

Its subcellular location is the cell membrane. The catalysed reaction is phosphonate(out) + ATP + H2O = phosphonate(in) + ADP + phosphate + H(+). Functionally, part of the ABC transporter complex PhnCDE involved in phosphonates import. Responsible for energy coupling to the transport system. The polypeptide is Phosphonates import ATP-binding protein PhnC 2 (Haloquadratum walsbyi (strain DSM 16790 / HBSQ001)).